Consider the following 124-residue polypeptide: Small ribosomal subunit protein uS13 (124 aa).

The tract at residues 94–124 is disordered; that stretch reads KGLPVRGQRTKTNARTRKGPKRTVAGKKKAR.

Belongs to the universal ribosomal protein uS13 family. Part of the 30S ribosomal subunit. Forms a loose heterodimer with protein S19. Forms two bridges to the 50S subunit in the 70S ribosome.

Located at the top of the head of the 30S subunit, it contacts several helices of the 16S rRNA. In the 70S ribosome it contacts the 23S rRNA (bridge B1a) and protein L5 of the 50S subunit (bridge B1b), connecting the 2 subunits; these bridges are implicated in subunit movement. Contacts the tRNAs in the A and P-sites. The protein is Small ribosomal subunit protein uS13 of Pseudarthrobacter chlorophenolicus (strain ATCC 700700 / DSM 12829 / CIP 107037 / JCM 12360 / KCTC 9906 / NCIMB 13794 / A6) (Arthrobacter chlorophenolicus).